A 201-amino-acid chain; its full sequence is MINIWNKSKTVILALFLLFLSQVPLYYVEYENERQNLFGVANKITVNFILIGLLIILIAIMLGIKNGFYKNAKRTLEWKNIILILILIIPSVALDILFSQFIQFHHLGRMDNQIAIDSVMGSLLWFGKILGVALLAPILEESIFRASIYKIFSNNKIAFVFSSLLFTFMHSGYSWVFLIYLPMSLAVTFIYHRRSDVILKS.

The next 5 membrane-spanning stretches (helical) occupy residues 10-30 (TVILALFLLFLSQVPLYYVEY), 44-64 (ITVNFILIGLLIILIAIMLGI), 82-102 (ILILILIIPSVALDILFSQFI), 119-139 (VMGSLLWFGKILGVALLAPIL), and 159-179 (FVFSSLLFTFMHSGYSWVFLI).

This sequence belongs to the UPF0177 family.

Its subcellular location is the cell membrane. The polypeptide is UPF0177 protein YajF (yajF) (Lactococcus lactis subsp. lactis (strain IL1403) (Streptococcus lactis)).